A 494-amino-acid chain; its full sequence is Nuclear distribution protein PAC1 (494 aa).

The 33-residue stretch at 14–46 folds into the LisH domain; that stretch reads QKNELDKSVLRYLNWNYKQTVRHEHAQDYESVR. A coiled-coil region spans residues 90-123; the sequence is NSIVRLQKKIIELEQNTETLVSQIKDLNTQVSEL. 7 WD repeats span residues 153–192, 196–244, 251–292, 295–334, 347–395, 415–454, and 457–492; these read NVES…IPLA, SHTK…CKFQ, GHEH…SLKT, PHSQ…SVGT, HFIE…LMAH, GHLS…HVWE, and HTGF…SNVF.

The protein belongs to the WD repeat LIS1/nudF family. As to quaternary structure, self-associates. Interacts with NDL1 and dynein.

It localises to the cytoplasm. The protein localises to the cytoskeleton. The protein resides in the spindle pole. In terms of biological role, positively regulates the activity of the minus-end directed microtubule motor protein dynein. Plays a central role in positioning the mitotic spindle at the bud neck during cell division. Targets cytoplasmic dynein to microtubule plus ends, thereby promoting dynein-mediated microtubule sliding along the bud cortex and consequently the movement of the mitotic spindle to the bud neck. This chain is Nuclear distribution protein PAC1, found in Saccharomyces cerevisiae (strain JAY291) (Baker's yeast).